The chain runs to 227 residues: Cytochrome c oxidase subunit 2 (227 aa).

Over 1 to 14 the chain is Mitochondrial intermembrane; the sequence is MAYPFQLGLQDASS. A helical transmembrane segment spans residues 15-45; that stretch reads PIMEELTNFHDHTLMIVFLISSLVLYIISSM. Residues 46-59 lie on the Mitochondrial matrix side of the membrane; the sequence is LTTKMTHTSTMDAQ. A helical membrane pass occupies residues 60 to 87; the sequence is EVETIWTVLPAVILILIALPSLRILYMM. Residues 88–227 lie on the Mitochondrial intermembrane side of the membrane; the sequence is DEINNPVLTV…HFENWSTSMI (140 aa). Residues histidine 161, cysteine 196, glutamate 198, cysteine 200, histidine 204, and methionine 207 each contribute to the Cu cation site. Glutamate 198 is a Mg(2+) binding site.

It belongs to the cytochrome c oxidase subunit 2 family. In terms of assembly, component of the cytochrome c oxidase (complex IV, CIV), a multisubunit enzyme composed of 14 subunits. The complex is composed of a catalytic core of 3 subunits MT-CO1, MT-CO2 and MT-CO3, encoded in the mitochondrial DNA, and 11 supernumerary subunits COX4I, COX5A, COX5B, COX6A, COX6B, COX6C, COX7A, COX7B, COX7C, COX8 and NDUFA4, which are encoded in the nuclear genome. The complex exists as a monomer or a dimer and forms supercomplexes (SCs) in the inner mitochondrial membrane with NADH-ubiquinone oxidoreductase (complex I, CI) and ubiquinol-cytochrome c oxidoreductase (cytochrome b-c1 complex, complex III, CIII), resulting in different assemblies (supercomplex SCI(1)III(2)IV(1) and megacomplex MCI(2)III(2)IV(2)). Found in a complex with TMEM177, COA6, COX18, COX20, SCO1 and SCO2. Interacts with TMEM177 in a COX20-dependent manner. Interacts with COX20. Interacts with COX16. Cu cation serves as cofactor.

It localises to the mitochondrion inner membrane. It catalyses the reaction 4 Fe(II)-[cytochrome c] + O2 + 8 H(+)(in) = 4 Fe(III)-[cytochrome c] + 2 H2O + 4 H(+)(out). Its function is as follows. Component of the cytochrome c oxidase, the last enzyme in the mitochondrial electron transport chain which drives oxidative phosphorylation. The respiratory chain contains 3 multisubunit complexes succinate dehydrogenase (complex II, CII), ubiquinol-cytochrome c oxidoreductase (cytochrome b-c1 complex, complex III, CIII) and cytochrome c oxidase (complex IV, CIV), that cooperate to transfer electrons derived from NADH and succinate to molecular oxygen, creating an electrochemical gradient over the inner membrane that drives transmembrane transport and the ATP synthase. Cytochrome c oxidase is the component of the respiratory chain that catalyzes the reduction of oxygen to water. Electrons originating from reduced cytochrome c in the intermembrane space (IMS) are transferred via the dinuclear copper A center (CU(A)) of subunit 2 and heme A of subunit 1 to the active site in subunit 1, a binuclear center (BNC) formed by heme A3 and copper B (CU(B)). The BNC reduces molecular oxygen to 2 water molecules using 4 electrons from cytochrome c in the IMS and 4 protons from the mitochondrial matrix. This is Cytochrome c oxidase subunit 2 (MT-CO2) from Lophuromys flavopunctatus (Yellow-spotted brush-furred rat).